Reading from the N-terminus, the 282-residue chain is uncharacterized protein (282 aa).

This is an uncharacterized protein from Mycoplasma pneumoniae (strain ATCC 29342 / M129 / Subtype 1) (Mycoplasmoides pneumoniae).